The sequence spans 215 residues: Ribulose-phosphate 3-epimerase (215 aa).

Ser-13 provides a ligand contact to substrate. The a divalent metal cation site is built by His-38, Asp-40, His-69, and Asp-175. Asp-40 acts as the Proton acceptor in catalysis. Substrate is bound by residues His-69, 175 to 177 (DGG), and 196 to 197 (GS). Asp-175 (proton donor) is an active-site residue.

It belongs to the ribulose-phosphate 3-epimerase family. Requires a divalent metal cation as cofactor.

The enzyme catalyses D-ribulose 5-phosphate = D-xylulose 5-phosphate. It functions in the pathway carbohydrate degradation. Its function is as follows. Catalyzes the reversible epimerization of D-ribulose 5-phosphate to D-xylulose 5-phosphate. This chain is Ribulose-phosphate 3-epimerase, found in Mycoplasma pneumoniae (strain ATCC 29342 / M129 / Subtype 1) (Mycoplasmoides pneumoniae).